A 304-amino-acid polypeptide reads, in one-letter code: PTB domain-containing engulfment adapter protein 1 (304 aa).

Residue Thr-16 is modified to Phosphothreonine. In terms of domain architecture, PID spans 21-176 (SKHYIPYNAK…AGMQKRIQDL (156 aa)). Positions 159–200 (DVETRKQIAGMQKRIQDLETENMELKNKVQDLESRLRTTQVS) form a coiled coil. Ser-223 bears the Phosphoserine mark.

It belongs to the ced-6 family. Homodimer. Interacts with clathrin and MEGF10. Interacts with GDP-bound ARF6, but not with GTP-bound ARF6. Part of a complex composed of GULP1, ACAP1 and ARF6. Interacts with ACAP1, LRP1 and STAB2. As to expression, detected throughout the brain, particularly in Purkinje cells, hippocampal and cortical neurons (at protein level).

The protein resides in the cytoplasm. Its function is as follows. Modulates cellular glycosphingolipid and cholesterol transport. May play a role in the internalization of various LRP1 ligands, such as PSAP. May function as an adapter protein. Required for efficient phagocytosis of apoptotic cells. Increases cellular levels of GTP-bound ARF6. This chain is PTB domain-containing engulfment adapter protein 1 (Gulp1), found in Mus musculus (Mouse).